The sequence spans 385 residues: tRNA (guanine-N(7)-)-methyltransferase non-catalytic subunit wuho (385 aa).

WD repeat units follow at residues K68 to L108, G155 to S194, and G198 to H236.

The protein belongs to the WD repeat TRM82 family. In terms of assembly, forms a heterodimer with the catalytic subunit Mettl1. Interacts with mei-P26 and weakly interacts with bgcn; required for the function or formation of the mei-P26-bgcn-bam-sxl complex. Interacts with nanos; may be involved in mei-P26-dependent derepression of the BMP signaling pathway. Interacts with Myc; the interaction may be mediated by mei-P26 and may be involved in the regulation of ribosome biogenesis. In terms of tissue distribution, in testis, it is present at high level in hub cells, a niche for germline stem cells of testis. Ubiquitously expressed in all testicular cells throughout spermatogenesis. Ubiquitously expressed in all germline and somatic cells of the ovary.

It localises to the nucleus. The protein localises to the cytoplasm. The protein operates within tRNA modification; N(7)-methylguanine-tRNA biosynthesis. Required for the Mettl1-dependent formation of N(7)-methylguanine at position 46 (m7G46) in tRNA. In the Mettl1-wuho methyltransferase complex, it is required to stabilize and induce conformational changes of the catalytic subunit. Required for binding of nanos mRNA and repression of translation by the mei-P26-bgcn-bam-sxl complex. May cooperate with mei-P26 and nanos to derepress the BMP signaling pathway. May cooperate with mei-P26 to suppress expression of a subset of microRNAs. May cooperate with mei-P26 to regulate bam expression levels in germline cells during gametogenesis. Required to promote mitosis to meiosis transition during gametogenesis. May regulate germline cell division in part by regulating ribosome biogenesis. This Drosophila grimshawi (Hawaiian fruit fly) protein is tRNA (guanine-N(7)-)-methyltransferase non-catalytic subunit wuho.